The sequence spans 294 residues: 4-hydroxy-tetrahydrodipicolinate synthase (294 aa).

Residue Thr44 coordinates pyruvate. The Proton donor/acceptor role is filled by Tyr132. Lys161 serves as the catalytic Schiff-base intermediate with substrate. Ile203 contributes to the pyruvate binding site.

Belongs to the DapA family. As to quaternary structure, homotetramer; dimer of dimers.

It is found in the cytoplasm. The enzyme catalyses L-aspartate 4-semialdehyde + pyruvate = (2S,4S)-4-hydroxy-2,3,4,5-tetrahydrodipicolinate + H2O + H(+). It participates in amino-acid biosynthesis; L-lysine biosynthesis via DAP pathway; (S)-tetrahydrodipicolinate from L-aspartate: step 3/4. Catalyzes the condensation of (S)-aspartate-beta-semialdehyde [(S)-ASA] and pyruvate to 4-hydroxy-tetrahydrodipicolinate (HTPA). The chain is 4-hydroxy-tetrahydrodipicolinate synthase from Aquifex aeolicus (strain VF5).